Reading from the N-terminus, the 189-residue chain is MAAKQPPPLMKKHSQTDLVSRLKTRKILGVGGEDDDGEVHRSKISQVLGNEIKFAVREPLGLRVWQFVSAVLFSGIAIMALAFPDQLYDAVFDGAQVTSKTPIRLYGGALLSISLIMWNALYTAEKVIIRWTLLTEACYFSVQFLVVTATLAETGLASQGILLLLASRLLFVAISVYYYYQVGRKPKKV.

Over 1–63 the chain is Cytoplasmic; sequence MAAKQPPPLM…FAVREPLGLR (63 aa). Position 14 is a phosphoserine (Ser-14). A helical membrane pass occupies residues 64–84; sequence VWQFVSAVLFSGIAIMALAFP. Residues 85 to 108 are Extracellular-facing; sequence DQLYDAVFDGAQVTSKTPIRLYGG. A helical transmembrane segment spans residues 109–129; that stretch reads ALLSISLIMWNALYTAEKVII. Residue Arg-130 is a topological domain, cytoplasmic. The helical transmembrane segment at 131 to 151 threads the bilayer; it reads WTLLTEACYFSVQFLVVTATL. The Extracellular segment spans residues 152–159; sequence AETGLASQ. The chain crosses the membrane as a helical span at residues 160–180; the sequence is GILLLLASRLLFVAISVYYYY. The Cytoplasmic portion of the chain corresponds to 181–189; sequence QVGRKPKKV.

It is found in the membrane. This is Tumor protein p53-inducible protein 11 (TP53I11) from Bos taurus (Bovine).